We begin with the raw amino-acid sequence, 590 residues long: PWWP domain-containing protein 2B (590 aa).

Disordered regions lie at residues 52–110, 182–347, 360–398, and 426–467; these read APLP…PPLP, KSTL…EHEP, YLRD…PQGP, and DSLD…TVPP. A Phosphoserine modification is found at Ser-84. Residues 99–110 are compositionally biased toward pro residues; sequence PEPPPPLVPPLP. Phosphoserine is present on residues Ser-186 and Ser-206. Positions 208–217 are enriched in basic and acidic residues; the sequence is PDRELRKPEE. The residue at position 250 (Ser-250) is a Phosphoserine. The span at 296-305 shows a compositional bias: basic and acidic residues; that stretch reads VLDRESRDRP. The span at 376 to 385 shows a compositional bias: low complexity; sequence GLADLSSGSS. Ser-447 carries the post-translational modification Phosphoserine. Residues 490–550 enclose the PWWP domain; it reads VGDIVWGKIH…ISKLSPFSEF (61 aa).

In terms of assembly, component of a MTA1-specific subcomplex of the NuRD complex composed of PWWP2B, MTA1 and HDAC1 but does not contain CHD4 and MBD3. Interacts with MTA1 and HDAC1. Interacts with MTA2, MTA3, HDAC2, RBBP4, RBBP7, BRCC3 and ZNF516. Does not interact with CHD4 and MBD3. In terms of processing, deubiquitinated by BRCC3; leading to its stabilization.

In terms of biological role, chromatin-binding protein that acts as an adapter between distinct nucleosome components (H3K36me3 or H2A.Z) and chromatin-modifying complexes, contributing to the regulation of the levels of histone acetylation at actively transcribed genes. Competes with CHD4 and MBD3 for interaction with MTA1 to form a NuRD subcomplex, preventing the formation of full NuRD complex (containing CHD4 and MBD3), leading to recruitment of HDACs to gene promoters resulting in turn in the deacetylation of nearby H3K27 and H2A.Z. Plays a role in facilitating transcriptional elongation through regulation of histone acetylation. Negatively regulates brown adipocyte thermogenesis by interacting with and stabilizing HDAC1 at the UCP1 gene promoter, thereby promoting histone deacetylation at the promoter leading to the repression of UCP1 expression. This is PWWP domain-containing protein 2B (PWWP2B) from Homo sapiens (Human).